Here is a 113-residue protein sequence, read N- to C-terminus: Flagellar hook-basal body complex protein FliE (113 aa).

The protein belongs to the FliE family.

It localises to the bacterial flagellum basal body. The chain is Flagellar hook-basal body complex protein FliE from Burkholderia mallei (strain NCTC 10247).